The primary structure comprises 180 residues: Sec-independent protein translocase protein TatB (180 aa).

A helical transmembrane segment spans residues 1 to 21; it reads MFDIGWSELLVIGVVALIAIG. The disordered stretch occupies residues 77-180; sequence TRGDLMTRLT…DQTARGAKAS (104 aa). The segment covering 105–129 has biased composition (low complexity); sequence ADKPSVSSDAASASGSAAPEAGAAE.

Belongs to the TatB family. The Tat system comprises two distinct complexes: a TatABC complex, containing multiple copies of TatA, TatB and TatC subunits, and a separate TatA complex, containing only TatA subunits. Substrates initially bind to the TatABC complex, which probably triggers association of the separate TatA complex to form the active translocon.

The protein localises to the cell inner membrane. Part of the twin-arginine translocation (Tat) system that transports large folded proteins containing a characteristic twin-arginine motif in their signal peptide across membranes. Together with TatC, TatB is part of a receptor directly interacting with Tat signal peptides. TatB may form an oligomeric binding site that transiently accommodates folded Tat precursor proteins before their translocation. This Nitrobacter winogradskyi (strain ATCC 25391 / DSM 10237 / CIP 104748 / NCIMB 11846 / Nb-255) protein is Sec-independent protein translocase protein TatB.